Here is a 216-residue protein sequence, read N- to C-terminus: Ras-related protein RABE1d (216 aa).

Position 22–29 (22–29) interacts with GTP; the sequence is GDSGVGKS. The Effector region signature appears at 44–52; that stretch reads FITTIGIDF. GTP is bound by residues 70–74, 128–131, and 159–160; these read DTAGQ, NKAD, and SA. Residues 196-216 are disordered; sequence TKQDTAASSSTAEKSACCSYV. A compositionally biased stretch (low complexity) spans 200–216; the sequence is TAASSSTAEKSACCSYV. 2 S-geranylgeranyl cysteine lipidation sites follow: Cys-212 and Cys-213.

Belongs to the small GTPase superfamily. Rab family. Interacts with PI5K2.

It is found in the golgi apparatus membrane. The protein resides in the cell membrane. In terms of biological role, involved in membrane trafficking from the Golgi to the plasma membrane. The polypeptide is Ras-related protein RABE1d (RABE1D) (Arabidopsis thaliana (Mouse-ear cress)).